Here is a 1305-residue protein sequence, read N- to C-terminus: MSLLQSALDFLAGPGSLGGAAGRDQSDFVGQTVELGELRLRVRRVLAEGGFAFVYEAQDLGSGREYALKRLLSNEEEKNRAIIQEVCFLKKLSGHPNIVQFCSAASIGKEESDTGQAEFLLLTELCKGQLVEFLKRVECKGPLSCDSILKIFYQTCRAVQHMHRQKPPIIHRDLKVENLLLSNQGTIKLCDFGSATTISHYPDYSWSAQKRAMVEEEITRNTTPMYRTPEIVDLYSNFPIGEKQDIWALGCILYLLCFRQHPFEDGAKLRIVNGKYSIPVNDTRYTVFHDLIRAMLKVNPVERLSIAEVVRQLQEIAAARNVNPKAPITELLEQNGGYGNSGPSRAQPPCGGTVNSSGVLALAEYDQPYGGFLDILRGGTERLFTNLKDTSSKVIQSVANYAKGDLDISYITSRIAVMSFPAEGVESAIKNNIEDVRMFLDAKHPGHYAVYNLSPRIYRASKFHNRVTECGWAVRRAPHLHSLYTLCRSMHAWLREDHRNVCVVHCMDGRAASAVAVCAFLCFCRLFSTAEAAVYMFSMKRCPPGIWPSHKRYIEYVCDMVAEEPITPHSKPMLVKSVVMTPVPLFSKQRNGCRPFCEVYVGEERVTTTSQEYDRMKEFKIEDGKAVIPLGVTVQGDVLIIIYHARATLGGRLQAKMASMKMFQIQFHTGFVPRNATTVKFAKYDLDACDIQEKYPDLFQVNLEVEVEPRDRPSREAPPWENTSLRGLNPKILFSNREEQQDILSKFGKPELPRQPGSTAQYDAEAGSPEAEITESDSPQSSSTDTNHFLHTLDWQEEKEPETGLDNTSPKESQSVLIADGDGSEVSDEEEASFPSEERKPGAGEDTPRLAAGTKQQDLIFDVGMLAAPQEPVQPEEGVDLLGLHSEGDLRPAAPLQACGVPSSNTDLLSCLLEPSDAAQVGPPGDLLGGEAPLLLASPVSPLGLQNNLQGKVPDTVDPFDQFLLSSNSDTQPCSKPDLFGEFLNSDSVASSTAFPSTHSAPPPSCSTAFLHLGDLPAEPSKVIASSSHPDLLGGWDTWADTATPGPASIPVPEGTLFSSAGHPAPPGPNPSQTKSQNLDPFADLSDLSSSLQGLPAGLPAGGFVGAPAPTQKSNSPWQANRPTAPGTSWTPQAKPAPRASEQLRSHFSVIGAREERGVRVPSFAQKPKVSENDFEDLLPNQGFSKSDKKGPKTMAEMRKQELARDTDPLKLKLLDWIEGKERNIRALLSTLHTVLWDGESRWTPVSMADLVTPEQVKKQYRRAVLVVHPDKATGQPYEQYAKMIFMELNDAWSEFENQGSRPLF.

The residue at position 2 (Ser2) is an N-acetylserine. Residues Ser2 and Ser16 each carry the phosphoserine modification. In terms of domain architecture, Protein kinase spans 40–317 (LRVRRVLAEG…EVVRQLQEIA (278 aa)). Residues 46–54 (LAEGGFAFV) and Lys69 contribute to the ATP site. Residue Asp173 is the Proton acceptor of the active site. The 168-residue stretch at 397 to 564 (SVANYAKGDL…EYVCDMVAEE (168 aa)) folds into the Phosphatase tensin-type domain. Ser454 carries the phosphoserine modification. The C2 tensin-type domain maps to 570 to 708 (SKPMLVKSVV…FQVNLEVEVE (139 aa)). Disordered regions lie at residues 707–732 (VEPR…NPKI) and 747–854 (FGKP…AAGT). The residue at position 768 (Ser768) is a Phosphoserine. Thr774 carries the post-translational modification Phosphothreonine. The segment covering 776 to 789 (SDSPQSSSTDTNHF) has biased composition (polar residues). At Ser781 the chain carries Phosphoserine. Thr792 is subject to Phosphothreonine. A compositionally biased stretch (polar residues) spans 805–816 (LDNTSPKESQSV). Phosphoserine occurs at positions 809, 824, and 827. A compositionally biased stretch (acidic residues) spans 822 to 832 (DGSEVSDEEEA). Basic and acidic residues predominate over residues 836-848 (SEERKPGAGEDTP). Ser938 carries the phosphoserine modification. The tract at residues 1037–1139 (DTWADTATPG…WTPQAKPAPR (103 aa)) is disordered. The span at 1084 to 1099 (DLSDLSSSLQGLPAGL) shows a compositional bias: low complexity. The span at 1111 to 1132 (TQKSNSPWQANRPTAPGTSWTP) shows a compositional bias: polar residues. Omega-N-methylarginine is present on Arg1122. Ser1171 bears the Phosphoserine mark. Positions 1241-1305 (SRWTPVSMAD…FENQGSRPLF (65 aa)) constitute a J domain.

It belongs to the protein kinase superfamily. Ser/Thr protein kinase family.

It localises to the cytoplasm. The protein resides in the perinuclear region. Its subcellular location is the golgi apparatus. It is found in the trans-Golgi network. The protein localises to the cell junction. It localises to the focal adhesion. The protein resides in the cytoplasmic vesicle. Its subcellular location is the clathrin-coated vesicle. It carries out the reaction L-seryl-[protein] + ATP = O-phospho-L-seryl-[protein] + ADP + H(+). The catalysed reaction is L-threonyl-[protein] + ATP = O-phospho-L-threonyl-[protein] + ADP + H(+). In terms of biological role, associates with cyclin G and CDK5. Seems to act as an auxilin homolog that is involved in the uncoating of clathrin-coated vesicles by Hsc70 in non-neuronal cells. Expression oscillates slightly during the cell cycle, peaking at G1. May play a role in clathrin-mediated endocytosis and intracellular trafficking, and in the dynamics of clathrin assembly/disassembly. The polypeptide is Cyclin-G-associated kinase (Mus musculus (Mouse)).